The primary structure comprises 292 residues: tRNA pseudouridine synthase B (292 aa).

The active-site Nucleophile is the aspartate 40.

This sequence belongs to the pseudouridine synthase TruB family. Type 1 subfamily.

It catalyses the reaction uridine(55) in tRNA = pseudouridine(55) in tRNA. Responsible for synthesis of pseudouridine from uracil-55 in the psi GC loop of transfer RNAs. This Mycoplasma mycoides subsp. mycoides SC (strain CCUG 32753 / NCTC 10114 / PG1) protein is tRNA pseudouridine synthase B.